A 697-amino-acid polypeptide reads, in one-letter code: Serine/threonine-protein kinase tousled-like 2 (697 aa).

2 disordered regions span residues 27 to 136 (KAPL…TAPV) and 289 to 315 (LAKR…NKTN). The span at 31 to 44 (NSESSNQSLCSLGS) shows a compositional bias: polar residues. Residues 46–62 (SDKELEQTPEKKQNDQR) are compositionally biased toward basic and acidic residues. The segment covering 111–131 (SSPQHSLSNPLPLPSQQCSPP) has biased composition (low complexity). Coiled coils occupy residues 264-293 (AFQN…AKRK) and 334-372 (FKLR…IHNE). The Protein kinase domain occupies 387 to 666 (YLLLHLLGRG…VQQLACDPYL (280 aa)). ATP is bound by residues 393 to 401 (LGRGGFSEV) and Lys416. The active-site Proton acceptor is the Asp517.

Belongs to the protein kinase superfamily. Ser/Thr protein kinase family. Monomer. May form homodimers; homodimerization may enhance autophosphoylation and enzymatic activity. Heterodimer with TLK1. Mg(2+) is required as a cofactor. In terms of processing, phosphorylated. Autophosphorylated; phosphorylation promotes the assembly of higher order oligomers and enzymatic activity.

It localises to the nucleus. The protein resides in the nucleoplasm. Its subcellular location is the cytoplasm. The protein localises to the perinuclear region. It is found in the cytoskeleton. The enzyme catalyses L-seryl-[protein] + ATP = O-phospho-L-seryl-[protein] + ADP + H(+). It catalyses the reaction L-threonyl-[protein] + ATP = O-phospho-L-threonyl-[protein] + ADP + H(+). Serine/threonine-protein kinase involved in the process of chromatin assembly and probably also DNA replication, transcription, repair, and chromosome segregation. Negative regulator of amino acid starvation-induced autophagy. This chain is Serine/threonine-protein kinase tousled-like 2, found in Xenopus tropicalis (Western clawed frog).